Consider the following 282-residue polypeptide: Pantothenate synthetase (282 aa).

30–37 (MGALHRGH) lines the ATP pocket. The active-site Proton donor is histidine 37. Glutamine 61 is a (R)-pantoate binding site. Glutamine 61 lines the beta-alanine pocket. 147–150 (GEKD) is a binding site for ATP. (R)-pantoate is bound at residue glutamine 153. 184–187 (LSSR) is a binding site for ATP.

Belongs to the pantothenate synthetase family. Homodimer.

It localises to the cytoplasm. The enzyme catalyses (R)-pantoate + beta-alanine + ATP = (R)-pantothenate + AMP + diphosphate + H(+). It participates in cofactor biosynthesis; (R)-pantothenate biosynthesis; (R)-pantothenate from (R)-pantoate and beta-alanine: step 1/1. Functionally, catalyzes the condensation of pantoate with beta-alanine in an ATP-dependent reaction via a pantoyl-adenylate intermediate. In Rhizorhabdus wittichii (strain DSM 6014 / CCUG 31198 / JCM 15750 / NBRC 105917 / EY 4224 / RW1) (Sphingomonas wittichii), this protein is Pantothenate synthetase.